Reading from the N-terminus, the 157-residue chain is Peptide methionine sulfoxide reductase MsrA (157 aa).

The active site involves Cys-10.

It belongs to the MsrA Met sulfoxide reductase family.

The catalysed reaction is L-methionyl-[protein] + [thioredoxin]-disulfide + H2O = L-methionyl-(S)-S-oxide-[protein] + [thioredoxin]-dithiol. It carries out the reaction [thioredoxin]-disulfide + L-methionine + H2O = L-methionine (S)-S-oxide + [thioredoxin]-dithiol. Its function is as follows. Has an important function as a repair enzyme for proteins that have been inactivated by oxidation. Catalyzes the reversible oxidation-reduction of methionine sulfoxide in proteins to methionine. The protein is Peptide methionine sulfoxide reductase MsrA of Clostridium perfringens (strain ATCC 13124 / DSM 756 / JCM 1290 / NCIMB 6125 / NCTC 8237 / Type A).